A 290-amino-acid chain; its full sequence is 4-hydroxy-3-methylbut-2-enyl diphosphate reductase (290 aa).

Residue C13 participates in [4Fe-4S] cluster binding. H41 and H75 together coordinate (2E)-4-hydroxy-3-methylbut-2-enyl diphosphate. H41 and H75 together coordinate dimethylallyl diphosphate. Isopentenyl diphosphate is bound by residues H41 and H75. C97 is a binding site for [4Fe-4S] cluster. H129 serves as a coordination point for (2E)-4-hydroxy-3-methylbut-2-enyl diphosphate. H129 contacts dimethylallyl diphosphate. Residue H129 participates in isopentenyl diphosphate binding. E131 serves as the catalytic Proton donor. T167 is a (2E)-4-hydroxy-3-methylbut-2-enyl diphosphate binding site. C198 is a [4Fe-4S] cluster binding site. The (2E)-4-hydroxy-3-methylbut-2-enyl diphosphate site is built by S226, S227, N228, and S270. Dimethylallyl diphosphate contacts are provided by S226, S227, N228, and S270. Residues S226, S227, N228, and S270 each coordinate isopentenyl diphosphate.

It belongs to the IspH family. Requires [4Fe-4S] cluster as cofactor.

It catalyses the reaction isopentenyl diphosphate + 2 oxidized [2Fe-2S]-[ferredoxin] + H2O = (2E)-4-hydroxy-3-methylbut-2-enyl diphosphate + 2 reduced [2Fe-2S]-[ferredoxin] + 2 H(+). It carries out the reaction dimethylallyl diphosphate + 2 oxidized [2Fe-2S]-[ferredoxin] + H2O = (2E)-4-hydroxy-3-methylbut-2-enyl diphosphate + 2 reduced [2Fe-2S]-[ferredoxin] + 2 H(+). The protein operates within isoprenoid biosynthesis; dimethylallyl diphosphate biosynthesis; dimethylallyl diphosphate from (2E)-4-hydroxy-3-methylbutenyl diphosphate: step 1/1. It functions in the pathway isoprenoid biosynthesis; isopentenyl diphosphate biosynthesis via DXP pathway; isopentenyl diphosphate from 1-deoxy-D-xylulose 5-phosphate: step 6/6. In terms of biological role, catalyzes the conversion of 1-hydroxy-2-methyl-2-(E)-butenyl 4-diphosphate (HMBPP) into a mixture of isopentenyl diphosphate (IPP) and dimethylallyl diphosphate (DMAPP). Acts in the terminal step of the DOXP/MEP pathway for isoprenoid precursor biosynthesis. In Bacteroides fragilis (strain ATCC 25285 / DSM 2151 / CCUG 4856 / JCM 11019 / LMG 10263 / NCTC 9343 / Onslow / VPI 2553 / EN-2), this protein is 4-hydroxy-3-methylbut-2-enyl diphosphate reductase.